The following is a 655-amino-acid chain: Ubiquilin-3 (655 aa).

The 77-residue stretch at 22-98 folds into the Ubiquitin-like domain; the sequence is IKVTVKTPKD…LVIKRQHRAM (77 aa). The interval 102–124 is disordered; it reads CPAASVPTQGPSPGSLPQPSSIY. Residues 110–122 are compositionally biased toward low complexity; it reads QGPSPGSLPQPSS. An STI1 domain is found at 194 to 233; it reads NPHMQQLIQHNPEIGHILNNPEIMRQTLEFLRNPAMMQEM. 3 disordered regions span residues 277 to 330, 364 to 399, and 412 to 447; these read PFAT…PDIR, ASAL…LPEE, and FLRY…LVSG. Over residues 279–290 the composition is skewed to low complexity; sequence ATATTDNATTTT. The span at 318 to 330 shows a compositional bias: basic and acidic residues; the sequence is GRQDGDQDAPDIR. The segment covering 377–395 has biased composition (low complexity); that stretch reads VNRVPPSSPSSQEPGSGQP. Over residues 432 to 441 the composition is skewed to polar residues; that stretch reads KSSTGHSTNL. In terms of domain architecture, UBA spans 609-655; the sequence is QLQPEAHFQVQLEQLRSMGFLNREANLQALIATGGDVDAAVEKLRQS.

As to expression, testis specific.

The sequence is that of Ubiquilin-3 (UBQLN3) from Homo sapiens (Human).